We begin with the raw amino-acid sequence, 220 residues long: Deoxyribose-phosphate aldolase (220 aa).

The active-site Proton donor/acceptor is the Asp92. Residue Lys157 is the Schiff-base intermediate with acetaldehyde of the active site. The active-site Proton donor/acceptor is the Lys186.

The protein belongs to the DeoC/FbaB aldolase family. DeoC type 1 subfamily.

It is found in the cytoplasm. The enzyme catalyses 2-deoxy-D-ribose 5-phosphate = D-glyceraldehyde 3-phosphate + acetaldehyde. It functions in the pathway carbohydrate degradation; 2-deoxy-D-ribose 1-phosphate degradation; D-glyceraldehyde 3-phosphate and acetaldehyde from 2-deoxy-alpha-D-ribose 1-phosphate: step 2/2. In terms of biological role, catalyzes a reversible aldol reaction between acetaldehyde and D-glyceraldehyde 3-phosphate to generate 2-deoxy-D-ribose 5-phosphate. This chain is Deoxyribose-phosphate aldolase, found in Caldicellulosiruptor saccharolyticus (strain ATCC 43494 / DSM 8903 / Tp8T 6331).